The primary structure comprises 429 residues: MNFSESERLQQLSNEYILGGVNSPSRSYKAVGGGAPVVMKEGHGAYLYDVDGNKFIDYLQAYGPIITGHAHPHITKAIQEQAAKGVLFGTPTELEIEFSKKLRDAIPSLEKIRFVNSGTEAVMTTIRVARAYTKRNKIIKFAGSYHGHSDLVLVAAGSGPSQLGSPDSAGVPESVAREVITVPFNDINAYKEAIEFWGDEIAAVLVEPIVGNFGMVMPQPGFLEEVNEISHNNGTLVIYDEVITAFRFHYGAAQDLLGVIPDLTAFGKIVGGGLPIGGYGGRQDIMEQVAPLGPAYQAGTMAGNPLSMKAGIALLEVLEQDGVYEKLDSLGQQLEEGLLKLIEKHNITATINRIYGSLTLYFTDEKVTHYDQVEHSDGEAFGKFFKLMLNQGINLAPSKFEAWFLTTEHTEEDIQQTLKAADYAFSQMK.

At Lys268 the chain carries N6-(pyridoxal phosphate)lysine.

The protein belongs to the class-III pyridoxal-phosphate-dependent aminotransferase family. HemL subfamily. Homodimer. Requires pyridoxal 5'-phosphate as cofactor.

It is found in the cytoplasm. The enzyme catalyses (S)-4-amino-5-oxopentanoate = 5-aminolevulinate. Its pathway is porphyrin-containing compound metabolism; protoporphyrin-IX biosynthesis; 5-aminolevulinate from L-glutamyl-tRNA(Glu): step 2/2. The polypeptide is Glutamate-1-semialdehyde 2,1-aminomutase 2 (Staphylococcus aureus (strain MSSA476)).